The sequence spans 388 residues: Putative 8-amino-7-oxononanoate synthase (388 aa).

Position 18 (R18) interacts with substrate. Pyridoxal 5'-phosphate is bound at residue 105–106; it reads GY. H130 contacts substrate. Residues S176, 201 to 204, and 232 to 235 contribute to the pyridoxal 5'-phosphate site; these read DDAH and TLSK. K235 is modified (N6-(pyridoxal phosphate)lysine). T349 is a substrate binding site.

Belongs to the class-II pyridoxal-phosphate-dependent aminotransferase family. BioF subfamily. In terms of assembly, homodimer. Pyridoxal 5'-phosphate is required as a cofactor.

It carries out the reaction 6-carboxyhexanoyl-[ACP] + L-alanine + H(+) = (8S)-8-amino-7-oxononanoate + holo-[ACP] + CO2. It participates in cofactor biosynthesis; biotin biosynthesis. In terms of biological role, catalyzes the decarboxylative condensation of pimeloyl-[acyl-carrier protein] and L-alanine to produce 8-amino-7-oxononanoate (AON), [acyl-carrier protein], and carbon dioxide. The chain is Putative 8-amino-7-oxononanoate synthase (bioF) from Acetivibrio thermocellus (strain ATCC 27405 / DSM 1237 / JCM 9322 / NBRC 103400 / NCIMB 10682 / NRRL B-4536 / VPI 7372) (Clostridium thermocellum).